The chain runs to 435 residues: Trigger factor (435 aa).

A PPIase FKBP-type domain is found at 163 to 248 (GELASVTFSA…VHAVKERKMP (86 aa)).

This sequence belongs to the FKBP-type PPIase family. Tig subfamily.

It is found in the cytoplasm. The catalysed reaction is [protein]-peptidylproline (omega=180) = [protein]-peptidylproline (omega=0). In terms of biological role, involved in protein export. Acts as a chaperone by maintaining the newly synthesized protein in an open conformation. Functions as a peptidyl-prolyl cis-trans isomerase. This is Trigger factor from Maridesulfovibrio salexigens (strain ATCC 14822 / DSM 2638 / NCIMB 8403 / VKM B-1763) (Desulfovibrio salexigens).